The sequence spans 425 residues: Pleckstrin homology domain-containing family A member 2 (425 aa).

The PH 1 domain occupies 7 to 113 (QNRICGFLDI…WVEALNQASK (107 aa)). Residue K141 forms a Glycyl lysine isopeptide (Lys-Gly) (interchain with G-Cter in SUMO2) linkage. Phosphoserine is present on S184. One can recognise a PH 2 domain in the interval 198-298 (PLIKSGYCVK…WIKEIGAAVQ (101 aa)). Phosphoserine occurs at positions 314 and 349. Positions 374-410 (AEDSLFTPRLGESSTSAVLPSSRIRHRSEPQHPKEKP) are disordered. Positions 400–410 (RSEPQHPKEKP) are enriched in basic and acidic residues.

As to quaternary structure, binds MPDZ and PTPN13.

It localises to the cytoplasm. It is found in the cell membrane. Its subcellular location is the nucleus. Binds specifically to phosphatidylinositol 3,4-diphosphate (PtdIns3,4P2), but not to other phosphoinositides. May recruit other proteins to the plasma membrane. In Bos taurus (Bovine), this protein is Pleckstrin homology domain-containing family A member 2 (PLEKHA2).